Reading from the N-terminus, the 178-residue chain is Cysteine-rich venom protein VAR3 (178 aa).

The signal sequence occupies residues 1-22 (MILLKLYLTLAAILCQSRGTTS). The region spanning 41–169 (NKHNDLRRTV…PLKYFLVCQY (129 aa)) is the SCP domain. Cystine bridges form between cysteine 77–cysteine 156, cysteine 95–cysteine 170, and cysteine 151–cysteine 167.

It belongs to the CRISP family. In terms of processing, contains 8 disulfide bonds. Expressed by the venom gland.

The protein resides in the secreted. In terms of biological role, blocks ryanodine receptors, and potassium channels. The chain is Cysteine-rich venom protein VAR3 from Varanus acanthurus (Ridge-tailed monitor).